Reading from the N-terminus, the 310-residue chain is Beta sliding clamp (310 aa).

The protein belongs to the beta sliding clamp family. Forms a ring-shaped head-to-tail homodimer around DNA which binds and tethers DNA polymerases and other proteins to the DNA. The DNA replisome complex has a single clamp-loading complex (3 tau and 1 each of delta, delta', psi and chi subunits) which binds 3 Pol III cores (1 core on the leading strand and 2 on the lagging strand) each with a beta sliding clamp dimer. Additional proteins in the replisome are other copies of gamma, psi and chi, Ssb, DNA helicase and RNA primase.

Its subcellular location is the cytoplasm. Its function is as follows. Confers DNA tethering and processivity to DNA polymerases and other proteins. Acts as a clamp, forming a ring around DNA (a reaction catalyzed by the clamp-loading complex) which diffuses in an ATP-independent manner freely and bidirectionally along dsDNA. Initially characterized for its ability to contact the catalytic subunit of DNA polymerase III (Pol III), a complex, multichain enzyme responsible for most of the replicative synthesis in bacteria; Pol III exhibits 3'-5' exonuclease proofreading activity. The beta chain is required for initiation of replication as well as for processivity of DNA replication. In Micrococcus luteus (Micrococcus lysodeikticus), this protein is Beta sliding clamp (dnaN).